Here is a 319-residue protein sequence, read N- to C-terminus: Putative peptide biosynthesis protein YydG (319 aa).

The Radical SAM core domain occupies 1-214 (MYNKTVSINL…HCPGYDIVYH (214 aa)). [4Fe-4S] cluster is bound by residues C14, C18, and C21.

[4Fe-4S] cluster is required as a cofactor.

Its function is as follows. Required for production of the modified peptide YydF. May activate a metalloenzyme (Potential). The chain is Putative peptide biosynthesis protein YydG (yydG) from Bacillus subtilis (strain 168).